The primary structure comprises 295 residues: Shikimate dehydrogenase (NADP(+)) (295 aa).

Residues 20-22 and T68 each bind shikimate; that span reads SWS. Residue K72 is the Proton acceptor of the active site. Shikimate contacts are provided by N93 and D108. Residues 132 to 136 and M234 contribute to the NADP(+) site; that span reads GNGGA. Shikimate is bound at residue Y236. NADP(+) is bound at residue G257.

This sequence belongs to the shikimate dehydrogenase family. In terms of assembly, homodimer.

It catalyses the reaction shikimate + NADP(+) = 3-dehydroshikimate + NADPH + H(+). The protein operates within metabolic intermediate biosynthesis; chorismate biosynthesis; chorismate from D-erythrose 4-phosphate and phosphoenolpyruvate: step 4/7. In terms of biological role, involved in the biosynthesis of the chorismate, which leads to the biosynthesis of aromatic amino acids. Catalyzes the reversible NADPH linked reduction of 3-dehydroshikimate (DHSA) to yield shikimate (SA). The protein is Shikimate dehydrogenase (NADP(+)) of Chlorobaculum tepidum (strain ATCC 49652 / DSM 12025 / NBRC 103806 / TLS) (Chlorobium tepidum).